Consider the following 174-residue polypeptide: ATP-dependent protease subunit HslV (174 aa).

T2 is an active-site residue. 3 residues coordinate Na(+): G157, C160, and T163.

This sequence belongs to the peptidase T1B family. HslV subfamily. A double ring-shaped homohexamer of HslV is capped on each side by a ring-shaped HslU homohexamer. The assembly of the HslU/HslV complex is dependent on binding of ATP.

The protein resides in the cytoplasm. The enzyme catalyses ATP-dependent cleavage of peptide bonds with broad specificity.. Allosterically activated by HslU binding. Functionally, protease subunit of a proteasome-like degradation complex believed to be a general protein degrading machinery. The chain is ATP-dependent protease subunit HslV from Shewanella woodyi (strain ATCC 51908 / MS32).